A 410-amino-acid polypeptide reads, in one-letter code: Probable tRNA sulfurtransferase (410 aa).

In terms of domain architecture, THUMP spans 58–167 (AELTRRLQEV…RREIFVSVER (110 aa)). ATP contacts are provided by residues 185 to 186 (LL), 210 to 211 (HF), Arg267, Gly289, and Gln298.

Belongs to the ThiI family.

It is found in the cytoplasm. The enzyme catalyses [ThiI sulfur-carrier protein]-S-sulfanyl-L-cysteine + a uridine in tRNA + 2 reduced [2Fe-2S]-[ferredoxin] + ATP + H(+) = [ThiI sulfur-carrier protein]-L-cysteine + a 4-thiouridine in tRNA + 2 oxidized [2Fe-2S]-[ferredoxin] + AMP + diphosphate. It catalyses the reaction [ThiS sulfur-carrier protein]-C-terminal Gly-Gly-AMP + S-sulfanyl-L-cysteinyl-[cysteine desulfurase] + AH2 = [ThiS sulfur-carrier protein]-C-terminal-Gly-aminoethanethioate + L-cysteinyl-[cysteine desulfurase] + A + AMP + 2 H(+). The protein operates within cofactor biosynthesis; thiamine diphosphate biosynthesis. In terms of biological role, catalyzes the ATP-dependent transfer of a sulfur to tRNA to produce 4-thiouridine in position 8 of tRNAs, which functions as a near-UV photosensor. Also catalyzes the transfer of sulfur to the sulfur carrier protein ThiS, forming ThiS-thiocarboxylate. This is a step in the synthesis of thiazole, in the thiamine biosynthesis pathway. The sulfur is donated as persulfide by IscS. The protein is Probable tRNA sulfurtransferase of Nocardia farcinica (strain IFM 10152).